Consider the following 1077-residue polypeptide: FKBP12-associated protein 1 homolog (1077 aa).

The interval 1–173 is disordered; the sequence is METSKNPSDL…MPKNSKEIKK (173 aa). Positions 15–29 are enriched in basic residues; that stretch reads ANVKKNRRRFQKSQK. Phosphoserine is present on S33. Residues 52–64 are compositionally biased toward basic and acidic residues; it reads EEVKTSLKEDSSK. The segment covering 76–87 has biased composition (polar residues); it reads PTSSVQLNVSKN. Basic and acidic residues predominate over residues 100-116; it reads SSKDEELRKHAKGEGKR. The span at 136–149 shows a compositional bias: low complexity; it reads SSNSSQETSSSKGS. A compositionally biased stretch (basic and acidic residues) spans 153–173; that stretch reads KSERSREAKSRMPKNSKEIKK. The RING-type; atypical zinc-finger motif lies at 197-247; the sequence is CSVCTDTINPSTSIWSCGTCYHVFHLSCIRKWCKNSIEQRNEDAWRCPYCQ. 8 consecutive NF-X1-type zinc fingers follow at residues 290–308, 348–367, 420–441, 485–503, 541–558, 595–614, 708–729, and 738–760; these read CEHPCPLLCHPGPCPPCTA, CGEHTCKKRCHSGLCGACFE, CGLHKCSKTCHPISETRAHCPF, CGHRCKYKCHLGSCGTCSE, CGRHQCNKKCCSGYSKAQ, CGNHFCQHMCHRGPCPRCLE, CKTHFCEKLCHPDGECESSCKK, and CEHVCQSPCHAGHPCDERIPCKA. The region spanning 835-897 is the R3H domain; it reads SDFADEVESL…KRNVMVYNKG (63 aa).

It belongs to the NFX1 family.

The protein localises to the cytoplasm. Its subcellular location is the golgi apparatus. It is found in the nucleus. In terms of biological role, may play a role in transcription regulation. This is FKBP12-associated protein 1 homolog (fap1) from Schizosaccharomyces pombe (strain 972 / ATCC 24843) (Fission yeast).